The chain runs to 118 residues: Na(+)/H(+) antiporter subunit G1 (118 aa).

3 consecutive transmembrane segments (helical) span residues 9 to 29, 47 to 67, and 69 to 89; these read LAVI…IGII, LGAI…DGYI, and MQLI…SHLI.

It belongs to the CPA3 antiporters (TC 2.A.63) subunit G family. May form a heterooligomeric complex that consists of seven subunits: mnhA1, mnhB1, mnhC1, mnhD1, mnhE1, mnhF1 and mnhG1.

It localises to the cell membrane. In terms of biological role, mnh complex is a Na(+)/H(+) antiporter involved in Na(+) excretion. The protein is Na(+)/H(+) antiporter subunit G1 (mnhG1) of Staphylococcus haemolyticus (strain JCSC1435).